The following is a 370-amino-acid chain: MSNKDTRVVVGMSGGVDSSVTAHILKEQGYDVIGIFMKNWDNTDENGYCTATEDYNDVIAVCNQIGIPYYAVNFEKEYWDKVFTYFLDEYKKGRTPNPDVMCNKEIKFKAFLEHALKLGADYVATGHYARVRRHEDGHVEMLRGVDNNKDQTYFLNQLSQSQLSRVMFPIGDIEKKEVRRIAEEQDLATAKKKDSTGICFIGERNFKEFLSQYLPAQSGEMRTLKGEKIGTHAGLMYYTIGQRHGLGIGGDGDPWFVVGKNLDDNILYVEQGFHHDALYSDYLIASDISFVNDVDLENGFECTAKFRYRQKDTKVFVKNENENAIRVIFNEPVRAITPGQSVVLYDGDVCLGGATIDDVYKESGQLSYVV.

Residues 11-18 (GMSGGVDS) and M37 contribute to the ATP site. Residues 97–99 (NPD) are interaction with target base in tRNA. C102 serves as the catalytic Nucleophile. Cysteines 102 and 199 form a disulfide. ATP is bound at residue G126. The segment at 149 to 151 (KDQ) is interaction with tRNA. The active-site Cysteine persulfide intermediate is C199. The interaction with tRNA stretch occupies residues 307 to 308 (RY).

This sequence belongs to the MnmA/TRMU family.

It is found in the cytoplasm. It carries out the reaction S-sulfanyl-L-cysteinyl-[protein] + uridine(34) in tRNA + AH2 + ATP = 2-thiouridine(34) in tRNA + L-cysteinyl-[protein] + A + AMP + diphosphate + H(+). Functionally, catalyzes the 2-thiolation of uridine at the wobble position (U34) of tRNA, leading to the formation of s(2)U34. In Staphylococcus saprophyticus subsp. saprophyticus (strain ATCC 15305 / DSM 20229 / NCIMB 8711 / NCTC 7292 / S-41), this protein is tRNA-specific 2-thiouridylase MnmA.